The primary structure comprises 377 residues: Flap endonuclease 1 (377 aa).

Residues 1–104 are N-domain; sequence MGIQGLAKLL…GELAKRTERR (104 aa). Asp34 provides a ligand contact to Mg(2+). DNA-binding residues include Arg47 and Arg70. The Mg(2+) site is built by Asp86, Glu158, Glu160, Asp179, and Asp181. The interval 122 to 253 is I-domain; it reads NIDKFSRRLV…KRSVDLIRQH (132 aa). Residue Glu158 coordinates DNA. DNA is bound by residues Gly231 and Asp233. Asp233 is a Mg(2+) binding site. Residues 336–344 form an interaction with PCNA region; the sequence is TQGRLDSFF. The interval 337–377 is disordered; the sequence is QGRLDSFFKVLPSPANKRKLQDGKGSQNKKAKTGGKFKRPK. Basic residues predominate over residues 363–377; sequence QNKKAKTGGKFKRPK.

This sequence belongs to the XPG/RAD2 endonuclease family. FEN1 subfamily. Interacts with PCNA. Three molecules of FEN1 bind to one PCNA trimer with each molecule binding to one PCNA monomer. PCNA stimulates the nuclease activity without altering cleavage specificity. The cofactor is Mg(2+). Post-translationally, phosphorylated. Phosphorylation upon DNA damage induces relocalization to the nuclear plasma.

The protein resides in the nucleus. Its subcellular location is the nucleolus. The protein localises to the nucleoplasm. It localises to the mitochondrion. Its function is as follows. Structure-specific nuclease with 5'-flap endonuclease and 5'-3' exonuclease activities involved in DNA replication and repair. During DNA replication, cleaves the 5'-overhanging flap structure that is generated by displacement synthesis when DNA polymerase encounters the 5'-end of a downstream Okazaki fragment. It enters the flap from the 5'-end and then tracks to cleave the flap base, leaving a nick for ligation. Also involved in the long patch base excision repair (LP-BER) pathway, by cleaving within the apurinic/apyrimidinic (AP) site-terminated flap. Acts as a genome stabilization factor that prevents flaps from equilibrating into structures that lead to duplications and deletions. Also possesses 5'-3' exonuclease activity on nicked or gapped double-stranded DNA, and exhibits RNase H activity. Also involved in replication and repair of rDNA and in repairing mitochondrial DNA. This Nematostella vectensis (Starlet sea anemone) protein is Flap endonuclease 1.